A 303-amino-acid chain; its full sequence is MQIYPLRLLPNKIDFDFMNFKKVSYTFSIILSLISFIWIGMYKFNFGIDFAGGIVIEVRLDQTPDLPKMRQVLGELGIGEVVLQNFGSERDLSIRFGSSSEDNLMKNIELIKSTLQNNFPYNFEYRKVDFVGPQVGRQLIEAGTMAMLFSFAAIMIYIWVRFEWYFGLGILIALVHDVILALGFMSITKLDFNLSTIAAVLTIIGYSVNDSVVIYDRIRENLRKYHKKGITEIINLSINETLSRTILTVVTTLLANLALVLFGGEAIRSFSVLVFFGIIAGTYSSIFISAPILTIFANKKFEK.

6 consecutive transmembrane segments (helical) span residues 28–48 (SIILSLISFIWIGMYKFNFGI), 140–160 (IEAGTMAMLFSFAAIMIYIWV), 164–184 (WYFGLGILIALVHDVILALGF), 194–214 (LSTIAAVLTIIGYSVNDSVVI), 246–266 (ILTVVTTLLANLALVLFGGEA), and 272–292 (VLVFFGIIAGTYSSIFISAPI).

Belongs to the SecD/SecF family. SecF subfamily. In terms of assembly, forms a complex with SecD. Part of the essential Sec protein translocation apparatus which comprises SecA, SecYEG and auxiliary proteins SecDF-YajC and YidC.

Its subcellular location is the cell inner membrane. Part of the Sec protein translocase complex. Interacts with the SecYEG preprotein conducting channel. SecDF uses the proton motive force (PMF) to complete protein translocation after the ATP-dependent function of SecA. In Rickettsia bellii (strain OSU 85-389), this protein is Protein translocase subunit SecF.